The following is a 396-amino-acid chain: Elongation factor Tu 1 (396 aa).

The tr-type G domain maps to 10–206 (KPHCNIGTIG…AVDAYIPQPE (197 aa)). The G1 stretch occupies residues 19–26 (GHVDHGKT). 19–26 (GHVDHGKT) contributes to the GTP binding site. Threonine 26 contributes to the Mg(2+) binding site. The tract at residues 60-64 (GITIS) is G2. The G3 stretch occupies residues 81–84 (DCPG). Residues 81–85 (DCPGH) and 136–139 (NKCD) contribute to the GTP site. Positions 136 to 139 (NKCD) are G4. Positions 174-176 (SAL) are G5.

Belongs to the TRAFAC class translation factor GTPase superfamily. Classic translation factor GTPase family. EF-Tu/EF-1A subfamily. As to quaternary structure, monomer.

Its subcellular location is the cytoplasm. It catalyses the reaction GTP + H2O = GDP + phosphate + H(+). GTP hydrolase that promotes the GTP-dependent binding of aminoacyl-tRNA to the A-site of ribosomes during protein biosynthesis. The polypeptide is Elongation factor Tu 1 (Rhodopseudomonas palustris (strain BisB5)).